The primary structure comprises 501 residues: MLO-like protein 5 (501 aa).

Residues 1-22 lie on the Extracellular side of the membrane; sequence MAGGGGGSTSGEGPRELDQTPT. A helical membrane pass occupies residues 23 to 43; sequence WAVSTVCGVIILISIVLELMI. The Cytoplasmic segment spans residues 44-68; it reads HKIGEVFTERRKKALYEALQKIKNE. The helical transmembrane segment at 69 to 89 threads the bilayer; the sequence is LMVLGFISLLLTFGQNYIASL. The Extracellular segment spans residues 90-151; that stretch reads CVASRYGHAM…ISLNALHQVH (62 aa). A helical membrane pass occupies residues 152-172; that stretch reads IFIFFLAVFHVIYSAITMMLG. Residues 173–273 lie on the Cytoplasmic side of the membrane; it reads RAKIRGWKVW…IKRSLEDDFK (101 aa). A helical membrane pass occupies residues 274–294; that stretch reads VVVGISPELWAFVMLFLLFDV. Residue histidine 295 is a topological domain, extracellular. A helical membrane pass occupies residues 296–316; sequence GWYVTAVITMIPPLLTLAIGT. Topologically, residues 317-359 are cytoplasmic; sequence KLQAIISDMALEIQERHAVIQGMPLVNVSDRHFWFSRPALVLH. The helical transmembrane segment at 360 to 380 threads the bilayer; the sequence is IIHFILFQNAFEITYFFWIWY. Residues 381 to 391 are Extracellular-facing; that stretch reads EFGLRSCFHHH. Residues 392–412 form a helical membrane-spanning segment; that stretch reads FALIIIRVALGVGVQFLCSYI. The Cytoplasmic portion of the chain corresponds to 413–501; it reads TLPLYALVTQ…SQSRDLLSGP (89 aa). The tract at residues 443–501 is disordered; that stretch reads WHKNAKKKSETPGQTQPPLPNLRPKTGGDIESASPANITASVDVKESDQSQSRDLLSGP. A calmodulin-binding region spans residues 450–471; the sequence is KSETPGQTQPPLPNLRPKTGGD. Positions 491-501 are enriched in polar residues; sequence QSQSRDLLSGP.

The protein belongs to the MLO family.

The protein localises to the membrane. May be involved in modulation of pathogen defense and leaf cell death. Activity seems to be regulated by Ca(2+)-dependent calmodulin binding and seems not to require heterotrimeric G proteins. This chain is MLO-like protein 5 (MLO5), found in Arabidopsis thaliana (Mouse-ear cress).